The following is a 465-amino-acid chain: Pancreatic triacylglycerol lipase (465 aa).

The first 16 residues, 1–16, serve as a signal peptide directing secretion; it reads MLLLWALPLLLGAVAG. 2 disulfides stabilise this stretch: cysteine 20–cysteine 26 and cysteine 108–cysteine 119. Catalysis depends on serine 170, which acts as the Nucleophile. The active-site Charge relay system is aspartate 194. The Ca(2+) site is built by glutamate 205, arginine 208, aspartate 210, and aspartate 213. Cysteine 255 and cysteine 279 are joined by a disulfide. The Charge relay system role is filled by histidine 281. 3 disulfides stabilise this stretch: cysteine 303–cysteine 314, cysteine 317–cysteine 321, and cysteine 449–cysteine 465. The region spanning 355 to 465 is the PLAT domain; that stretch reads WRYQVAVTLS…EDILLTLTPC (111 aa).

The protein belongs to the AB hydrolase superfamily. Lipase family. In terms of assembly, forms a 1:1 stoichiometric complex with (pro)colipase/CLPS.

It localises to the secreted. The enzyme catalyses a triacylglycerol + H2O = a diacylglycerol + a fatty acid + H(+). It catalyses the reaction 1,2,3-tributanoylglycerol + H2O = dibutanoylglycerol + butanoate + H(+). It carries out the reaction 1,2,3-tri-(9Z-octadecenoyl)-glycerol + H2O = di-(9Z)-octadecenoylglycerol + (9Z)-octadecenoate + H(+). The catalysed reaction is all-trans-retinyl hexadecanoate + H2O = all-trans-retinol + hexadecanoate + H(+). The enzyme catalyses 1,2-di-(9Z-octadecenoyl)-glycerol + H2O = (9Z-octadecenoyl)-glycerol + (9Z)-octadecenoate + H(+). With respect to regulation, inhibited by bile salts, is reactivated by (pro)colipase/CLPS. Its function is as follows. Plays an important role in fat metabolism. It preferentially splits the esters of long-chain fatty acids at positions 1 and 3, producing mainly 2-monoacylglycerol and free fatty acids, and shows considerably higher activity against insoluble emulsified substrates than against soluble ones. The protein is Pancreatic triacylglycerol lipase (PNLIP) of Oryctolagus cuniculus (Rabbit).